The chain runs to 315 residues: tRNA dimethylallyltransferase (315 aa).

13 to 20 (GPTASGKS) provides a ligand contact to ATP. 15 to 20 (TASGKS) contacts substrate. 2 interaction with substrate tRNA regions span residues 38–41 (DSMQ) and 162–166 (QRLAR).

Belongs to the IPP transferase family. In terms of assembly, monomer. Mg(2+) serves as cofactor.

The catalysed reaction is adenosine(37) in tRNA + dimethylallyl diphosphate = N(6)-dimethylallyladenosine(37) in tRNA + diphosphate. In terms of biological role, catalyzes the transfer of a dimethylallyl group onto the adenine at position 37 in tRNAs that read codons beginning with uridine, leading to the formation of N6-(dimethylallyl)adenosine (i(6)A). This is tRNA dimethylallyltransferase from Paramagnetospirillum magneticum (strain ATCC 700264 / AMB-1) (Magnetospirillum magneticum).